The sequence spans 151 residues: Deoxyuridine 5'-triphosphate nucleotidohydrolase (151 aa).

Substrate contacts are provided by residues 70 to 72 (RSG), Asn83, 87 to 89 (LID), and Met97.

This sequence belongs to the dUTPase family. Mg(2+) serves as cofactor.

It catalyses the reaction dUTP + H2O = dUMP + diphosphate + H(+). It functions in the pathway pyrimidine metabolism; dUMP biosynthesis; dUMP from dCTP (dUTP route): step 2/2. Functionally, this enzyme is involved in nucleotide metabolism: it produces dUMP, the immediate precursor of thymidine nucleotides and it decreases the intracellular concentration of dUTP so that uracil cannot be incorporated into DNA. This Pseudomonas syringae pv. syringae (strain B728a) protein is Deoxyuridine 5'-triphosphate nucleotidohydrolase.